The following is a 169-amino-acid chain: X polypeptide (169 aa).

The protein belongs to the IagB/IpgF/P19 family.

The polypeptide is X polypeptide (X) (Escherichia coli).